Reading from the N-terminus, the 210-residue chain is Protein GrpE (210 aa).

The segment at methionine 1 to glutamate 31 is disordered. Positions glutamate 12 to glutamate 21 are enriched in basic and acidic residues.

It belongs to the GrpE family. As to quaternary structure, homodimer.

It is found in the cytoplasm. Its function is as follows. Participates actively in the response to hyperosmotic and heat shock by preventing the aggregation of stress-denatured proteins, in association with DnaK and GrpE. It is the nucleotide exchange factor for DnaK and may function as a thermosensor. Unfolded proteins bind initially to DnaJ; upon interaction with the DnaJ-bound protein, DnaK hydrolyzes its bound ATP, resulting in the formation of a stable complex. GrpE releases ADP from DnaK; ATP binding to DnaK triggers the release of the substrate protein, thus completing the reaction cycle. Several rounds of ATP-dependent interactions between DnaJ, DnaK and GrpE are required for fully efficient folding. The sequence is that of Protein GrpE from Chromohalobacter salexigens (strain ATCC BAA-138 / DSM 3043 / CIP 106854 / NCIMB 13768 / 1H11).